The chain runs to 379 residues: UDP-N-acetylglucosamine--N-acetylmuramyl-(pentapeptide) pyrophosphoryl-undecaprenol N-acetylglucosamine transferase (379 aa).

UDP-N-acetyl-alpha-D-glucosamine-binding positions include 13–15 (TGG), Asn-123, Arg-166, Ser-194, and Gln-295.

Belongs to the glycosyltransferase 28 family. MurG subfamily.

The protein localises to the cell inner membrane. It carries out the reaction di-trans,octa-cis-undecaprenyl diphospho-N-acetyl-alpha-D-muramoyl-L-alanyl-D-glutamyl-meso-2,6-diaminopimeloyl-D-alanyl-D-alanine + UDP-N-acetyl-alpha-D-glucosamine = di-trans,octa-cis-undecaprenyl diphospho-[N-acetyl-alpha-D-glucosaminyl-(1-&gt;4)]-N-acetyl-alpha-D-muramoyl-L-alanyl-D-glutamyl-meso-2,6-diaminopimeloyl-D-alanyl-D-alanine + UDP + H(+). It participates in cell wall biogenesis; peptidoglycan biosynthesis. In terms of biological role, cell wall formation. Catalyzes the transfer of a GlcNAc subunit on undecaprenyl-pyrophosphoryl-MurNAc-pentapeptide (lipid intermediate I) to form undecaprenyl-pyrophosphoryl-MurNAc-(pentapeptide)GlcNAc (lipid intermediate II). This chain is UDP-N-acetylglucosamine--N-acetylmuramyl-(pentapeptide) pyrophosphoryl-undecaprenol N-acetylglucosamine transferase, found in Rhodospirillum centenum (strain ATCC 51521 / SW).